We begin with the raw amino-acid sequence, 157 residues long: Dihydrofolate reductase type 15 (157 aa).

The DHFR domain maps to lysine 2–lysine 156.

The protein belongs to the dihydrofolate reductase family. Homodimer.

The catalysed reaction is (6S)-5,6,7,8-tetrahydrofolate + NADP(+) = 7,8-dihydrofolate + NADPH + H(+). Its pathway is cofactor biosynthesis; tetrahydrofolate biosynthesis; 5,6,7,8-tetrahydrofolate from 7,8-dihydrofolate: step 1/1. Functionally, key enzyme in folate metabolism. Catalyzes an essential reaction for de novo glycine and purine synthesis, and for DNA precursor synthesis. The protein is Dihydrofolate reductase type 15 (dhfrXV) of Escherichia coli.